The sequence spans 589 residues: ATP-dependent lipid A-core flippase (589 aa).

5 helical membrane passes run 29 to 49, 68 to 88, 157 to 177, 254 to 274, and 283 to 303; these read WLLV…STFL, ALWL…AGYI, VIGA…AILL, ISSA…LLIA, and LSPG…PALK. In terms of domain architecture, ABC transmembrane type-1 spans 32–314; sequence VVAACGALLE…LTNVQNMLQS (283 aa). An ABC transporter domain is found at 346–582; the sequence is IEFRGITARY…DGLYAYLYSM (237 aa). 380 to 387 is a binding site for ATP; the sequence is GRSGSGKS.

The protein belongs to the ABC transporter superfamily. Lipid exporter (TC 3.A.1.106) family. In terms of assembly, homodimer.

The protein resides in the cell inner membrane. The catalysed reaction is ATP + H2O + lipid A-core oligosaccharideSide 1 = ADP + phosphate + lipid A-core oligosaccharideSide 2.. In terms of biological role, involved in lipopolysaccharide (LPS) biosynthesis. Translocates lipid A-core from the inner to the outer leaflet of the inner membrane. Transmembrane domains (TMD) form a pore in the inner membrane and the ATP-binding domain (NBD) is responsible for energy generation. The polypeptide is ATP-dependent lipid A-core flippase (Xylella fastidiosa (strain Temecula1 / ATCC 700964)).